The following is a 301-amino-acid chain: Probable alpha-L-glutamate ligase (301 aa).

The region spanning 104–287 is the ATP-grasp domain; the sequence is LQLLSRKGVG…VAALVMEFIE (184 aa). Residues Lys-141, 178–179, Asp-187, and 211–213 each bind ATP; these read EY and RSN. The Mg(2+) site is built by Asp-248, Glu-260, and Asn-262. Mn(2+)-binding residues include Asp-248, Glu-260, and Asn-262.

Belongs to the RimK family. Requires Mg(2+) as cofactor. Mn(2+) serves as cofactor.

The polypeptide is Probable alpha-L-glutamate ligase (Saccharophagus degradans (strain 2-40 / ATCC 43961 / DSM 17024)).